We begin with the raw amino-acid sequence, 328 residues long: NADH-quinone oxidoreductase subunit H 2 (328 aa).

8 helical membrane passes run 3–23, 77–97, 119–139, 165–185, 191–211, 250–270, 272–292, and 307–327; these read LIVALGVIVFKVALVIAILLL, FLFKLAPILALAPPFVVFAAI, VALLFVFAVIGLEVYGVIFGG, MGFAVIGVVMLAQSMSLLDIV, VWNVVYQPIGFFVFFVAGLAE, MVLVSVLTVILFFGGWNGVLI, LPPLLWFLLKVAFFVYLFMWF, and IGWKVLLPLSLANIIISGVVF.

It belongs to the complex I subunit 1 family. NDH-1 is composed of 14 different subunits. Subunits NuoA, H, J, K, L, M, N constitute the membrane sector of the complex.

Its subcellular location is the cell inner membrane. It carries out the reaction a quinone + NADH + 5 H(+)(in) = a quinol + NAD(+) + 4 H(+)(out). Functionally, NDH-1 shuttles electrons from NADH, via FMN and iron-sulfur (Fe-S) centers, to quinones in the respiratory chain. The immediate electron acceptor for the enzyme in this species is believed to be ubiquinone. Couples the redox reaction to proton translocation (for every two electrons transferred, four hydrogen ions are translocated across the cytoplasmic membrane), and thus conserves the redox energy in a proton gradient. This subunit may bind ubiquinone. The protein is NADH-quinone oxidoreductase subunit H 2 of Rhizobium meliloti (strain 1021) (Ensifer meliloti).